The primary structure comprises 382 residues: Protein phosphatase 1A (382 aa).

The N-myristoyl glycine moiety is linked to residue Gly-2. The PPM-type phosphatase domain maps to 23-291 (RYGLSSMQGW…DNMSVILICF (269 aa)). Residues Asp-60, Gly-61, Asp-239, and Asp-282 each coordinate Mn(2+). Phosphoserine is present on residues Ser-375 and Ser-377.

The protein belongs to the PP2C family. As to quaternary structure, monomer. Interacts with SMAD2; the interaction dephosphorylates SMAD2 in its C-terminal SXS motif resulting in disruption of the SMAD2/SMAD4 complex, SMAD2 nuclear export and termination of the TGF-beta-mediated signaling. Interacts with SMAD2; the interaction dephosphorylates SMAD2 in its C-terminal SXS motif resulting in disruption of the SMAD2/SMAD4 complex, SMAD2 nuclear export and termination of the TGF-beta-mediated signaling. Interacts with the phosphorylated form of IKBKB/IKKB. Requires Mg(2+) as cofactor. Mn(2+) is required as a cofactor. Post-translationally, N-myristoylation is essential for the recognition of its substrates for dephosphorylation.

Its subcellular location is the nucleus. The protein localises to the cytoplasm. It localises to the cytosol. It is found in the membrane. It carries out the reaction O-phospho-L-seryl-[protein] + H2O = L-seryl-[protein] + phosphate. The catalysed reaction is O-phospho-L-threonyl-[protein] + H2O = L-threonyl-[protein] + phosphate. In terms of biological role, enzyme with a broad specificity. Negatively regulates TGF-beta signaling through dephosphorylating SMAD2 and SMAD3, resulting in their dissociation from SMAD4, nuclear export of the SMADs and termination of the TGF-beta-mediated signaling. Dephosphorylates PRKAA1 and PRKAA2. Plays an important role in the termination of TNF-alpha-mediated NF-kappa-B activation through dephosphorylating and inactivating IKBKB/IKKB. The protein is Protein phosphatase 1A (Ppm1a) of Mus musculus (Mouse).